The chain runs to 814 residues: MMILSILATVVLLGALFYHRVSLFISSLILLAWTAALGVAGLWSAWVLVPLAIILVPFNFAPMRKSMISAPVFRGFRKVMPPMSRTEKEAIDAGTTWWEGDLFQGKPDWKKLHNYPQPRLTAEEQAFLDGPVEEACRMANDFQITHELADLPPELWAYLKEHRFFAMIIKKEYGGLEFSAYAQSRVLQKLSGVSGILAITVGVPNSLGPGELLQHYGTDEQKDHYLPRLARGQEIPCFALTSPEAGSDAGAIPDTGIVCMGEWQGQQVLGMRLTWNKRYITLAPIATVLGLAFKLSDPEKLLGGAEDLGITCALIPTTTPGVEIGRRHFPLNVPFQNGPTRGKDVFVPIDYIIGGPKMAGQGWRMLVECLSVGRGITLPSNSTGGVKSVALATGAYAHIRRQFKISIGKMEGIEEPLARIAGNAYVMDAAASLITYGIMLGEKPAVLSAIVKYHCTHRGQQSIIDAMDITGGKGIMLGQSNFLARAYQGAPIAITVEGANILTRSMMIFGQGAIRCHPYVLEEMEAAKNNDVNAFDKLLFKHIGHVGSNKVRSFWLGLTRGLTSSTPTGDATKRYYQHLNRLSANLALLSDVSMAVLGGSLKRRERISARLGDILSQLYLASAVLKRYDDEGRNEADLPLVHWGVQDALYQAEQAMDDLLQNFPNRVVAGLLNVVIFPTGRHYLAPSDKLDHKVAKILQVPNATRSRIGRGQYLTPSEHNPVGLLEEALVDVIAADPIHQRICKELGKNLPFTRLDELAHNALVKGLIDKDEAAILVKAEESRLRSINVDDFDPEELATKPVKLPEKVRKVEAA.

Residue glutamate 497 is the Proton acceptor of the active site.

This sequence belongs to the acyl-CoA dehydrogenase family. FAD is required as a cofactor.

The catalysed reaction is a medium-chain 2,3-saturated fatty acyl-CoA + oxidized [electron-transfer flavoprotein] + H(+) = a medium-chain (2E)-enoyl-CoA + reduced [electron-transfer flavoprotein]. It catalyses the reaction a long-chain 2,3-saturated fatty acyl-CoA + oxidized [electron-transfer flavoprotein] + H(+) = a long-chain (2E)-enoyl-CoA + reduced [electron-transfer flavoprotein]. It functions in the pathway lipid metabolism; fatty acid beta-oxidation. Functionally, catalyzes the dehydrogenation of acyl-coenzymes A (acyl-CoAs) to 2-enoyl-CoAs, the first step of the beta-oxidation cycle of fatty acid degradation. Is required for E.coli to utilize dodecanoate or oleate as the sole carbon and energy source for growth. The polypeptide is Acyl-coenzyme A dehydrogenase (Escherichia coli (strain K12)).